We begin with the raw amino-acid sequence, 236 residues long: UPF0257 lipoprotein YnfC (236 aa).

The first 16 residues, M1–G16, serve as a signal peptide directing secretion. The N-palmitoyl cysteine moiety is linked to residue C17. A lipid anchor (S-diacylglycerol cysteine) is attached at C17.

This sequence belongs to the UPF0257 family.

Its subcellular location is the cell membrane. The chain is UPF0257 lipoprotein YnfC from Escherichia coli O45:K1 (strain S88 / ExPEC).